The chain runs to 261 residues: 4-hydroxy-tetrahydrodipicolinate reductase (261 aa).

Residues 11–16, 96–98, and 122–125 contribute to the NAD(+) site; these read GFTGAM, GTT, and APNF. The active-site Proton donor/acceptor is the histidine 152. Histidine 153 is a (S)-2,3,4,5-tetrahydrodipicolinate binding site. The Proton donor role is filled by lysine 156. Position 162–163 (162–163) interacts with (S)-2,3,4,5-tetrahydrodipicolinate; that stretch reads GT.

It belongs to the DapB family.

Its subcellular location is the cytoplasm. The catalysed reaction is (S)-2,3,4,5-tetrahydrodipicolinate + NAD(+) + H2O = (2S,4S)-4-hydroxy-2,3,4,5-tetrahydrodipicolinate + NADH + H(+). The enzyme catalyses (S)-2,3,4,5-tetrahydrodipicolinate + NADP(+) + H2O = (2S,4S)-4-hydroxy-2,3,4,5-tetrahydrodipicolinate + NADPH + H(+). The protein operates within amino-acid biosynthesis; L-lysine biosynthesis via DAP pathway; (S)-tetrahydrodipicolinate from L-aspartate: step 4/4. Catalyzes the conversion of 4-hydroxy-tetrahydrodipicolinate (HTPA) to tetrahydrodipicolinate. The sequence is that of 4-hydroxy-tetrahydrodipicolinate reductase from Lactobacillus acidophilus (strain ATCC 700396 / NCK56 / N2 / NCFM).